Consider the following 258-residue polypeptide: MAVISMKQLLEAGVHFGHQTRRWNPKMKKYIFTERNGIYIIDLQKTVKKVDEAYNFLKQVSEDGGQVLFVGTKKQAQESVKSEAERAGQFYINQRWLGGLLTNYKTISKRIKRISEIEKMEEDGLFEVLPKKEVVELKKEYDRLIKFLGGIRDMKSMPQALFVVDPRKERNAIAEARKLNIPIVGIVDTNCDPDEIDYVIPANDDAIRAVKLLTAKMADAILEGQQGVSNEEVAAEQNIDLDEKEKSEETEATEATEE.

The segment at 226-258 (QGVSNEEVAAEQNIDLDEKEKSEETEATEATEE) is disordered.

It belongs to the universal ribosomal protein uS2 family.

This is Small ribosomal subunit protein uS2 from Staphylococcus aureus (strain COL).